We begin with the raw amino-acid sequence, 196 residues long: ATP-dependent Clp protease proteolytic subunit (196 aa).

Residue serine 101 is the Nucleophile of the active site. The active site involves histidine 126.

The protein belongs to the peptidase S14 family. In terms of assembly, component of the chloroplastic Clp protease core complex.

It localises to the plastid. The protein resides in the chloroplast stroma. It carries out the reaction Hydrolysis of proteins to small peptides in the presence of ATP and magnesium. alpha-casein is the usual test substrate. In the absence of ATP, only oligopeptides shorter than five residues are hydrolyzed (such as succinyl-Leu-Tyr-|-NHMec, and Leu-Tyr-Leu-|-Tyr-Trp, in which cleavage of the -Tyr-|-Leu- and -Tyr-|-Trp bonds also occurs).. Its function is as follows. Cleaves peptides in various proteins in a process that requires ATP hydrolysis. Has a chymotrypsin-like activity. Plays a major role in the degradation of misfolded proteins. The polypeptide is ATP-dependent Clp protease proteolytic subunit (Atropa belladonna (Belladonna)).